The primary structure comprises 170 residues: Large ribosomal subunit protein bL9 (170 aa).

Residues 149–170 form a disordered region; that stretch reads DGDNEDLDEDNAADENEDYSEE.

It belongs to the bacterial ribosomal protein bL9 family.

Its function is as follows. Binds to the 23S rRNA. The protein is Large ribosomal subunit protein bL9 of Psychrobacter cryohalolentis (strain ATCC BAA-1226 / DSM 17306 / VKM B-2378 / K5).